A 123-amino-acid polypeptide reads, in one-letter code: Protein Wnt-7a (123 aa).

Residue serine 1 is the site of O-palmitoleoyl serine; by PORCN attachment. The disordered linker stretch occupies residues 33–61; it reads VEPVRASRNKRPTFLKIKKPLSYLKPMDT. Cysteine 89 and cysteine 104 form a disulfide bridge. An N-linked (GlcNAc...) asparagine glycan is attached at asparagine 90.

It belongs to the Wnt family. Post-translationally, palmitoleoylation is required for efficient binding to frizzled receptors. Depalmitoleoylation leads to Wnt signaling pathway inhibition.

The protein localises to the secreted. It localises to the extracellular space. Its subcellular location is the extracellular matrix. Its function is as follows. Ligand for members of the frizzled family of seven transmembrane receptors that functions in the canonical Wnt/beta-catenin signaling pathway. Plays an important role in embryonic development, including dorsal versus ventral patterning during limb development, skeleton development and urogenital tract development. Required for central nervous system (CNS) angiogenesis and blood-brain barrier regulation. The polypeptide is Protein Wnt-7a (WNT-7A) (Plethodon jordani (Red-cheeked salamander)).